Reading from the N-terminus, the 458-residue chain is N-acetylgalactosamine kinase (458 aa).

The alpha-D-galactose site is built by Arg43, Glu49, His50, and Asp52. ATP contacts are provided by Gly143, Ser145, and Ser146. Alpha-D-galactose is bound at residue Asp190. The active-site Proton acceptor is the Asp190. The ATP site is built by Asn233 and Lys234.

This sequence belongs to the GHMP kinase family. GalK subfamily. Monomer.

It catalyses the reaction N-acetyl-alpha-D-galactosamine + ATP = N-acetyl-alpha-D-galactosamine 1-phosphate + ADP + H(+). Functionally, acts on GalNAc. Also acts as a galactokinase when galactose is present at high concentrations. In Pongo abelii (Sumatran orangutan), this protein is N-acetylgalactosamine kinase (GALK2).